Here is a 326-residue protein sequence, read N- to C-terminus: Ketol-acid reductoisomerase (NADP(+)) (326 aa).

The region spanning 2 to 182 (AKIYGDEDAS…GFTRAGVIKT (181 aa)) is the KARI N-terminal Rossmann domain. Residues 25–28 (YGSQ), Arg48, Ser53, and 83–86 (DEVQ) each bind NADP(+). His108 is a catalytic residue. Gly134 lines the NADP(+) pocket. In terms of domain architecture, KARI C-terminal knotted spans 183–325 (TFREEVETDL…ERLRKMMGFE (143 aa)). Mg(2+) contacts are provided by Asp191, Glu195, Glu227, and Glu231. Ser252 is a substrate binding site.

This sequence belongs to the ketol-acid reductoisomerase family. Mg(2+) is required as a cofactor.

The catalysed reaction is (2R)-2,3-dihydroxy-3-methylbutanoate + NADP(+) = (2S)-2-acetolactate + NADPH + H(+). It carries out the reaction (2R,3R)-2,3-dihydroxy-3-methylpentanoate + NADP(+) = (S)-2-ethyl-2-hydroxy-3-oxobutanoate + NADPH + H(+). It participates in amino-acid biosynthesis; L-isoleucine biosynthesis; L-isoleucine from 2-oxobutanoate: step 2/4. The protein operates within amino-acid biosynthesis; L-valine biosynthesis; L-valine from pyruvate: step 2/4. In terms of biological role, involved in the biosynthesis of branched-chain amino acids (BCAA). Catalyzes an alkyl-migration followed by a ketol-acid reduction of (S)-2-acetolactate (S2AL) to yield (R)-2,3-dihydroxy-isovalerate. In the isomerase reaction, S2AL is rearranged via a Mg-dependent methyl migration to produce 3-hydroxy-3-methyl-2-ketobutyrate (HMKB). In the reductase reaction, this 2-ketoacid undergoes a metal-dependent reduction by NADPH to yield (R)-2,3-dihydroxy-isovalerate. This Methanopyrus kandleri (strain AV19 / DSM 6324 / JCM 9639 / NBRC 100938) protein is Ketol-acid reductoisomerase (NADP(+)).